We begin with the raw amino-acid sequence, 562 residues long: Probable E3 ubiquitin-protein ligase ARI7 (562 aa).

Positions 1–39 (MDSEEDMLDAHDMESGEDDFYSGGTDDCNDSDDGEPDYG) are disordered. Over residues 27 to 39 (DCNDSDDGEPDYG) the composition is skewed to acidic residues. The TRIAD supradomain stretch occupies residues 133 to 346 (SELTCGICFD…GGFYACNRYE (214 aa)). The Zn(2+) site is built by C137, C140, C154, H156, C159, C162, C182, C187, C226, C231, C248, C250, C255, C258, H263, C268, C295, and C298. Residues 137–187 (CGICFDSYPPEKIASVSCGHPFCTTCWTGYISTTINDGPGCLMLRCPDPSC) form an RING-type 1 zinc finger. The IBR-type zinc finger occupies 206–268 (EKYNRYFLRS…TEEAHRPVDC (63 aa)). An RING-type 2; atypical zinc finger spans residues 295 to 325 (CPRCKRPIEKNQGCMHMTCTPPCKYEFCWLC). C308 is an active-site residue. C313, C317, C322, C325, H332, and C342 together coordinate Zn(2+). The disordered stretch occupies residues 524-562 (ACSSKSTSSKSTGCSSKTRGKGKGSSRTGGSSRNPDDNL). Low complexity predominate over residues 525–540 (CSSKSTSSKSTGCSSK).

This sequence belongs to the RBR family. Ariadne subfamily. Zn(2+) serves as cofactor. As to expression, ubiquitous.

The catalysed reaction is [E2 ubiquitin-conjugating enzyme]-S-ubiquitinyl-L-cysteine + [acceptor protein]-L-lysine = [E2 ubiquitin-conjugating enzyme]-L-cysteine + [acceptor protein]-N(6)-ubiquitinyl-L-lysine.. It functions in the pathway protein modification; protein ubiquitination. Functionally, might act as an E3 ubiquitin-protein ligase, or as part of E3 complex, which accepts ubiquitin from specific E2 ubiquitin-conjugating enzymes and then transfers it to substrates. In Arabidopsis thaliana (Mouse-ear cress), this protein is Probable E3 ubiquitin-protein ligase ARI7 (ARI7).